The primary structure comprises 396 residues: Phosphoglycerate kinase (396 aa).

Residues 21–23 (DIN), Arg36, 59–62 (HFGR), Arg118, and Arg151 contribute to the substrate site. ATP-binding positions include Lys201, Glu323, and 353–356 (GGDT).

This sequence belongs to the phosphoglycerate kinase family. In terms of assembly, monomer.

It localises to the cytoplasm. The enzyme catalyses (2R)-3-phosphoglycerate + ATP = (2R)-3-phospho-glyceroyl phosphate + ADP. It participates in carbohydrate degradation; glycolysis; pyruvate from D-glyceraldehyde 3-phosphate: step 2/5. The chain is Phosphoglycerate kinase from Ruegeria sp. (strain TM1040) (Silicibacter sp.).